Here is a 575-residue protein sequence, read N- to C-terminus: MEWGRKLYPSAVSGPRSAGGLMFGLPPTAAVDMNQPRGPMTSLKEEPLGSRWAMQPVVDQSNLGIGRAHFEKQPPSNLRKSNFFHFVIALYDRAGQPIEIERTAFIGFIEKDSESDATKTNNGIQYRLQLLYANGARQEQDIFVRLIDSVTKQAIIYEGQDKNPEMCRVLLTHEVMCSRCCDKKSCGNRNETPSDPVIIDRFFLKFFLKCNQNCLKNAGNPRDMRRFQVVISTQVAVDGPLLAISDNMFVHNNSKHGRRAKRLDTTEGTGNTSLSISGHPLAPDSTYDGLYPPLPVATPCIKAISPSEGWTTGGATVIIVGDNFFDGLQVVFGTMLVWSELITSHAIRVQTPPRHIPGVVEVTLSYKSKQFCKGSPGRFVYVSALNEPTIDYGFQRLQKLIPRHPGDPEKLQKEIILKRAADLVEALYSMPRSPGGSTGFNSYAGQLAVSVQDGSGQWTEDDYQRAQSSSVSPRGGYCSSASTPHSSGGSYGATAASAAVAATANGYAPAPNMGTLSSSPGSVFNSTSMSAVSSTWHQAFVQHHHAATAHPHHHYPHPHQPWHNPAVSAATAAAV.

Positions 79-82 (RKSN) are interaction with DNA. A C5-type zinc finger spans residues 167-186 (CRVLLTHEVMCSRCCDKKSC). Interaction with DNA regions lie at residues 213 to 220 (NCLKNAGN) and 252 to 255 (NNSK). A disordered region spans residues 255-278 (KHGRRAKRLDTTEGTGNTSLSISG). A compositionally biased stretch (polar residues) spans 266–276 (TEGTGNTSLSI). Residues 299–382 (PCIKAISPSE…KGSPGRFVYV (84 aa)) enclose the IPT/TIG domain. Disordered regions lie at residues 456–492 (GQWT…GSYG) and 546–575 (AATA…AAAV). Residues 479–492 (SSASTPHSSGGSYG) are compositionally biased toward low complexity. Residues 546 to 557 (AATAHPHHHYPH) are compositionally biased toward basic residues. Residues 561-575 (PWHNPAVSAATAAAV) show a composition bias toward low complexity.

This sequence belongs to the COE family. As to expression, its expression at the blastoderm stage is restricted to a single stripe of cells corresponding to part of the intercalary and mandibular segment primordia, possibly parasegment O.

The protein resides in the nucleus. May act as a 'second-level regulator' of head patterning. Required for establishment of the PS(-1)/PS0 parasegmental border and formation of the intercalary segment. Required for expression of the segment polarity genes hedgehog, engrailed and wingless, and the segment-identity genes CAP and collar in the intercalary segment. Required at the onset of the gastrulation for the correct formation of the mandibular segment. This chain is Transcription factor collier (kn), found in Drosophila melanogaster (Fruit fly).